The primary structure comprises 359 residues: Probable dual-specificity RNA methyltransferase RlmN (359 aa).

The active-site Proton acceptor is E91. One can recognise a Radical SAM core domain in the interval 97-329 (QHYGHSVCVT…KKNGVNCVVR (233 aa)). Residues C104 and C340 are joined by a disulfide bond. Positions 111, 115, and 118 each coordinate [4Fe-4S] cluster. S-adenosyl-L-methionine is bound by residues 163 to 164 (GE), S195, 218 to 220 (SLH), and N296. Catalysis depends on C340, which acts as the S-methylcysteine intermediate.

This sequence belongs to the radical SAM superfamily. RlmN family. Requires [4Fe-4S] cluster as cofactor.

The protein localises to the cytoplasm. The enzyme catalyses adenosine(2503) in 23S rRNA + 2 reduced [2Fe-2S]-[ferredoxin] + 2 S-adenosyl-L-methionine = 2-methyladenosine(2503) in 23S rRNA + 5'-deoxyadenosine + L-methionine + 2 oxidized [2Fe-2S]-[ferredoxin] + S-adenosyl-L-homocysteine. It carries out the reaction adenosine(37) in tRNA + 2 reduced [2Fe-2S]-[ferredoxin] + 2 S-adenosyl-L-methionine = 2-methyladenosine(37) in tRNA + 5'-deoxyadenosine + L-methionine + 2 oxidized [2Fe-2S]-[ferredoxin] + S-adenosyl-L-homocysteine. Specifically methylates position 2 of adenine 2503 in 23S rRNA and position 2 of adenine 37 in tRNAs. This Streptococcus pyogenes serotype M5 (strain Manfredo) protein is Probable dual-specificity RNA methyltransferase RlmN.